We begin with the raw amino-acid sequence, 198 residues long: MAFAEQSPLTLHRRDLCSRSIWLARKIRSDLTALMESYVKHQGLNKNISLDSVDGVPVASTDRWSEMTEAERLQENLQAYRTFQGMLTKLLEDQRVHFTPTEGDFHQAIHTLTLQVSAFAYQLEELMALLEQKVPEKEADGMPVTIGDGGLFEKKLWGLKVLQELSQWTVRSIHDLRVISSHHMGISAHESHYGAKQM.

The protein belongs to the CNTF family. As to expression, nervous system.

It localises to the cytoplasm. CNTF is a survival factor for various neuronal cell types. Seems to prevent the degeneration of motor axons after axotomy. This is Ciliary neurotrophic factor (Cntf) from Mus musculus (Mouse).